A 98-amino-acid polypeptide reads, in one-letter code: NADH-ubiquinone oxidoreductase chain 4L (98 aa).

The next 3 helical transmembrane spans lie at Met1–Ile21, Ser28–Ile48, and Ala59–Val79.

The protein belongs to the complex I subunit 4L family. In terms of assembly, core subunit of respiratory chain NADH dehydrogenase (Complex I) which is composed of 45 different subunits.

It is found in the mitochondrion inner membrane. It carries out the reaction a ubiquinone + NADH + 5 H(+)(in) = a ubiquinol + NAD(+) + 4 H(+)(out). In terms of biological role, core subunit of the mitochondrial membrane respiratory chain NADH dehydrogenase (Complex I) which catalyzes electron transfer from NADH through the respiratory chain, using ubiquinone as an electron acceptor. Part of the enzyme membrane arm which is embedded in the lipid bilayer and involved in proton translocation. In Pseudocheirus peregrinus (Common ring-tailed possum), this protein is NADH-ubiquinone oxidoreductase chain 4L (MT-ND4L).